The sequence spans 872 residues: Probable GPI-anchored adhesin-like protein PGA25 (872 aa).

Positions 1–19 (MKVTAVSSVLLTVAALTNA) are cleaved as a signal peptide. Positions 43-65 (PAAAPAAQPAAQPTTQSPADQPT) are enriched in low complexity. Disordered stretches follow at residues 43–383 (PAAA…TIIP), 492–517 (KPTG…DETD), and 623–809 (PDDW…ECDT). A compositionally biased stretch (polar residues) spans 66–83 (VQSPVSSDQPSTAQPVAQ). Low complexity-rich tracts occupy residues 84–110 (NNLL…TRST) and 125–171 (SSEA…SSSS). Asn-92 is a glycosylation site (N-linked (GlcNAc...) asparagine). Residues 196–207 (ETDDEDCVEETE) are compositionally biased toward acidic residues. 3 stretches are compositionally biased toward low complexity: residues 208-225 (SPTS…VATT), 242-260 (SSAP…SSTT), and 274-293 (SSVP…NTTT). Asn-290 carries N-linked (GlcNAc...) asparagine glycosylation. Residues 317 to 328 (AEEDDEECEDPT) are compositionally biased toward acidic residues. Over residues 349-363 (TSQSKTSVSSVVSKS) the composition is skewed to low complexity. The span at 366 to 376 (EDDDDETECET) shows a compositional bias: acidic residues. Residues 495–506 (GSGSITVLPTKS) are compositionally biased toward polar residues. 2 stretches are compositionally biased toward acidic residues: residues 624–635 (DDWEDDGYEGED) and 646–659 (DDGE…DDGE). Gly residues-rich tracts occupy residues 666–692 (SSSG…GSGS), 701–710 (SSGGTWGGSG), and 731–740 (SWWGGSGSGS). Low complexity predominate over residues 741–760 (SSGSSSGVSSGDSGSSSVTG). Residues 761 to 771 (GSSGSWWGGSG) are compositionally biased toward gly residues. Residues 780–808 (DGYDDEDDQTPEPECDDEDDSWDDDEECD) show a composition bias toward acidic residues. A lipid anchor (GPI-anchor amidated alanine) is attached at Ala-845. Positions 846-872 (QSVTQIENIGGKVSASGLFVVLGLLLI) are cleaved as a propeptide — removed in mature form.

It belongs to the HYR1/IFF family. In terms of processing, the GPI-anchor is attached to the protein in the endoplasmic reticulum and serves to target the protein to the cell surface. There, the glucosamine-inositol phospholipid moiety is cleaved off and the GPI-modified mannoprotein is covalently attached via its lipidless GPI glycan remnant to the 1,6-beta-glucan of the outer cell wall layer.

The protein localises to the secreted. It is found in the cell wall. Its subcellular location is the membrane. In terms of biological role, probable GPI-anchored cell wall protein involved in cell wall organization, hyphal growth, as well as in host-fungal interaction and virulence. This Candida albicans (strain SC5314 / ATCC MYA-2876) (Yeast) protein is Probable GPI-anchored adhesin-like protein PGA25 (PGA25).